Here is a 458-residue protein sequence, read N- to C-terminus: Phosphoglucosamine mutase (458 aa).

The Phosphoserine intermediate role is filled by Ser-108. Residues Ser-108, Asp-247, Asp-249, and Asp-251 each contribute to the Mg(2+) site. Ser-108 bears the Phosphoserine mark.

This sequence belongs to the phosphohexose mutase family. Mg(2+) serves as cofactor. Activated by phosphorylation.

It carries out the reaction alpha-D-glucosamine 1-phosphate = D-glucosamine 6-phosphate. Catalyzes the conversion of glucosamine-6-phosphate to glucosamine-1-phosphate. The chain is Phosphoglucosamine mutase from Nitrosomonas europaea (strain ATCC 19718 / CIP 103999 / KCTC 2705 / NBRC 14298).